The sequence spans 165 residues: AIG2-like protein A (165 aa).

Y15 to D20 contributes to the substrate binding site. E83 serves as the catalytic Proton acceptor.

Belongs to the gamma-glutamylcyclotransferase family. In terms of tissue distribution, expressed only in seeds.

Functionally, putative gamma-glutamylcyclotransferase. The polypeptide is AIG2-like protein A (Arabidopsis thaliana (Mouse-ear cress)).